A 342-amino-acid polypeptide reads, in one-letter code: Glucokinase (342 aa).

Residue 7 to 12 (GDIGGT) coordinates ATP.

Belongs to the bacterial glucokinase family.

It is found in the cytoplasm. The catalysed reaction is D-glucose + ATP = D-glucose 6-phosphate + ADP + H(+). This Nostoc sp. (strain PCC 7120 / SAG 25.82 / UTEX 2576) protein is Glucokinase.